We begin with the raw amino-acid sequence, 349 residues long: Histidinol-phosphate aminotransferase (349 aa).

Lysine 206 carries the post-translational modification N6-(pyridoxal phosphate)lysine.

Belongs to the class-II pyridoxal-phosphate-dependent aminotransferase family. Histidinol-phosphate aminotransferase subfamily. Homodimer. Pyridoxal 5'-phosphate serves as cofactor.

It catalyses the reaction L-histidinol phosphate + 2-oxoglutarate = 3-(imidazol-4-yl)-2-oxopropyl phosphate + L-glutamate. Its pathway is amino-acid biosynthesis; L-histidine biosynthesis; L-histidine from 5-phospho-alpha-D-ribose 1-diphosphate: step 7/9. This Hydrogenobaculum sp. (strain Y04AAS1) protein is Histidinol-phosphate aminotransferase.